A 212-amino-acid chain; its full sequence is Thymidylate kinase (212 aa).

10 to 17 is a binding site for ATP; the sequence is GLEGAGKT.

The protein belongs to the thymidylate kinase family.

It catalyses the reaction dTMP + ATP = dTDP + ADP. Its function is as follows. Phosphorylation of dTMP to form dTDP in both de novo and salvage pathways of dTTP synthesis. The sequence is that of Thymidylate kinase from Yersinia pestis bv. Antiqua (strain Antiqua).